A 623-amino-acid polypeptide reads, in one-letter code: tRNA uridine 5-carboxymethylaminomethyl modification enzyme MnmG (623 aa).

Residues 11–16 (GAGHAG), V123, and S178 each bind FAD. Residue 270-284 (GPRYCPSIETKIVTF) participates in NAD(+) binding. Q367 is a binding site for FAD.

It belongs to the MnmG family. As to quaternary structure, homodimer. Heterotetramer of two MnmE and two MnmG subunits. FAD serves as cofactor.

The protein resides in the cytoplasm. Functionally, NAD-binding protein involved in the addition of a carboxymethylaminomethyl (cmnm) group at the wobble position (U34) of certain tRNAs, forming tRNA-cmnm(5)s(2)U34. The chain is tRNA uridine 5-carboxymethylaminomethyl modification enzyme MnmG from Phocaeicola vulgatus (strain ATCC 8482 / DSM 1447 / JCM 5826 / CCUG 4940 / NBRC 14291 / NCTC 11154) (Bacteroides vulgatus).